A 235-amino-acid chain; its full sequence is Probable transglycosylase IsaA (235 aa).

An N-terminal signal peptide occupies residues 1–28 (MKKTVIASTLAVSLGIAGYGLSGHEAHA). Residues 95-115 (ESSSNQEVSANTQSSNTNVQA) are compositionally biased toward polar residues. A disordered region spans residues 95 to 150 (ESSSNQEVSANTQSSNTNVQAVSAPTSSESRSYSTSTTSYSAPSHNYSSHSSSVRL). A compositionally biased stretch (low complexity) spans 117 to 147 (SAPTSSESRSYSTSTTSYSAPSHNYSSHSSS).

This sequence belongs to the transglycosylase family. IsaA subfamily.

The protein resides in the secreted. In terms of biological role, is able to cleave peptidoglycan. The chain is Probable transglycosylase IsaA (isaA) from Staphylococcus epidermidis (strain ATCC 35984 / DSM 28319 / BCRC 17069 / CCUG 31568 / BM 3577 / RP62A).